Reading from the N-terminus, the 125-residue chain is Conopressin-conophysin, isoform 1 (125 aa).

The first 22 residues, 1–22, serve as a signal peptide directing secretion; the sequence is MQMGRPTLLPCLLLLLVLSTQA. A disulfide bridge links C23 with C28. G31 is modified (glycine amide). A propeptide spanning residues 32–39 is cleaved from the precursor; the sequence is GKRDVHMI. 7 cysteine pairs are disulfide-bonded: C45–C85, C48–C59, C53–C75, C60–C65, C92–C112, C104–C124, and C113–C118.

The protein belongs to the vasopressin/oxytocin family. As to expression, expressed by the venom gland.

The protein localises to the secreted. Its function is as follows. Targets vasopressin-oxytocin related receptors. The sequence is that of Conopressin-conophysin, isoform 1 from Conus monile (Necklace cone).